The sequence spans 201 residues: Superoxide dismutase [Mn] (201 aa).

Histidine 27, histidine 81, aspartate 163, and histidine 167 together coordinate Mn(2+).

Belongs to the iron/manganese superoxide dismutase family. In terms of assembly, homodimer. Mn(2+) serves as cofactor.

The catalysed reaction is 2 superoxide + 2 H(+) = H2O2 + O2. Its function is as follows. Destroys superoxide anion radicals which are normally produced within the cells and which are toxic to biological systems. May play a critical role against oxidative stress, affecting both the survival and the virulence of S.pneumoniae. In Streptococcus pneumoniae serotype 4 (strain ATCC BAA-334 / TIGR4), this protein is Superoxide dismutase [Mn] (sodA).